The chain runs to 340 residues: MSSFNIHEILEQLYAAKSLTSEQSQAFFERVVQGQVDPIILSSVLTALKIKGETAQEITGAANALLAQATPFPRPDYDFTDIVGTGGDGLGTINISTASAFVAAACGLKVCKHGSRSVSSKSGSSDLLAAFGLNLDMSAQQARQCLDDLNICFLFAPQYHAGMRFAAPVRAALKTRSIFNVLGPLINPARPQFELMGVYAPELLKPIAEVHKELGMKRVMVVYGSGLDEIALHGETQVAELIDGKIIEYTLTPEDFGVQHYPVEAIIGGDPSENKIIIEQILQGKGSDAQQAAVAVNVSALLVLNGKADNFKEGTKQALAMMLTGKPLQLLKTLAERSQC.

5-phospho-alpha-D-ribose 1-diphosphate contacts are provided by residues G84, 87 to 88 (GD), T92, 94 to 97 (NIST), 112 to 120 (KHGSRSVSS), and S124. G84 contributes to the anthranilate binding site. S96 lines the Mg(2+) pocket. R170 contacts anthranilate. Residues D228 and E229 each coordinate Mg(2+).

The protein belongs to the anthranilate phosphoribosyltransferase family. As to quaternary structure, homodimer. Requires Mg(2+) as cofactor.

The catalysed reaction is N-(5-phospho-beta-D-ribosyl)anthranilate + diphosphate = 5-phospho-alpha-D-ribose 1-diphosphate + anthranilate. The protein operates within amino-acid biosynthesis; L-tryptophan biosynthesis; L-tryptophan from chorismate: step 2/5. Catalyzes the transfer of the phosphoribosyl group of 5-phosphorylribose-1-pyrophosphate (PRPP) to anthranilate to yield N-(5'-phosphoribosyl)-anthranilate (PRA). This Psychromonas ingrahamii (strain DSM 17664 / CCUG 51855 / 37) protein is Anthranilate phosphoribosyltransferase.